The chain runs to 188 residues: dCTP deaminase (188 aa).

Residues 111-116, 135-137, Q156, Y170, and Q180 contribute to the dCTP site; these read KSTYAR and TLE. The Proton donor/acceptor role is filled by E137.

Belongs to the dCTP deaminase family. As to quaternary structure, homotrimer.

It catalyses the reaction dCTP + H2O + H(+) = dUTP + NH4(+). The protein operates within pyrimidine metabolism; dUMP biosynthesis; dUMP from dCTP (dUTP route): step 1/2. In terms of biological role, catalyzes the deamination of dCTP to dUTP. The sequence is that of dCTP deaminase from Dechloromonas aromatica (strain RCB).